Consider the following 291-residue polypeptide: MGLAAPRKRTKISHDPNNTTWSRSTDGFGHRILKAQGWTPGSFLGPRNAAHSDLFTTASASHIRVVLKDDNLGLGARPKRGLLDEPTGLDAFKGLLGRLNGKSETQLVVEQQKRDDIKLARYAAAKWQAVRFVSGGLLVQESNETLVPPTSQNGQADSEVKNVPQGREEGLADDETTNSDSEDRHSVEKRKKKETNSRGSREKERKREKRQMRRDKKRKTSESTESEAEMQEKTRVQGPSEDVKPTEPKAPTLSRERRPMGRQMFRGRYIAQKKRALMDDKSLNEIFMIST.

Basic residues predominate over residues M1–K11. Disordered regions lie at residues M1–D26 and L146–R268. 2 stretches are compositionally biased toward polar residues: residues D15–T25 and L146–A156. One can recognise a G-patch domain in the interval T25 to K79. The segment covering E194–R205 has biased composition (basic and acidic residues). Residues K206–K219 show a composition bias toward basic residues. A compositionally biased stretch (basic and acidic residues) spans M230–E247.

The protein belongs to the PINX1 family.

The protein localises to the nucleus. The protein resides in the nucleolus. Functionally, involved in rRNA-processing at A0, A1 and A2 sites and negatively regulates telomerase. The sequence is that of Protein pxr1 (pxr1) from Aspergillus clavatus (strain ATCC 1007 / CBS 513.65 / DSM 816 / NCTC 3887 / NRRL 1 / QM 1276 / 107).